Here is a 110-residue protein sequence, read N- to C-terminus: Secreted Ly-6/uPAR-related protein 1 (110 aa).

Positions 1 to 22 are cleaved as a signal peptide; sequence MTLRWAMWLLLLAAWSMGYGEA. The region spanning 24-73 is the UPAR/Ly6 domain; sequence RCYTCEQPTAINSCKNIAQCKMEDTACKTVLETVEAAFPFNHSPMVTRSC. 5 cysteine pairs are disulfide-bonded: cysteine 25/cysteine 50, cysteine 28/cysteine 37, cysteine 43/cysteine 73, cysteine 77/cysteine 93, and cysteine 94/cysteine 99.

As to quaternary structure, homodimer. Interacts with PLAU. Interacts with CHRNA7. Expressed in skin, eye, whole lung, trachea, esophagus and stomach. Widely expressed in various tissues including spleen and thymus but not pancreas. Expressed in macrophages, dendritic cells, T and B cells. Expressed in lung specifically in ciliated bronchial epithelial cells (at protein level). Expression is decreased in lungs of asthmatic model mice. Expressed in the cornea.

It localises to the secreted. Has an antitumor activity. Was found to be a marker of late differentiation of the skin. Implicated in maintaining the physiological and structural integrity of the keratinocyte layers of the skin. In vitro down-regulates keratinocyte proliferation; the function may involve the proposed role as modulator of nicotinic acetylcholine receptors (nAChRs) activity. In vitro inhibits alpha-7-dependent nAChR currents in an allosteric manner. In T cells may be involved in regulation of intracellular Ca(2+) signaling. Seems to have a immunomodulatory function in the cornea. The function may implicate a possible role as a scavenger receptor for PLAU thereby blocking PLAU-dependent functions of PLAUR such as in cell migration and proliferation. The protein is Secreted Ly-6/uPAR-related protein 1 (Slurp1) of Mus musculus (Mouse).